We begin with the raw amino-acid sequence, 494 residues long: Protein nucleotidyltransferase YdiU (494 aa).

Gly-101, Gly-103, Arg-104, Lys-123, Asp-135, Gly-136, Arg-186, and Arg-193 together coordinate ATP. The active-site Proton acceptor is the Asp-262. Residues Asn-263 and Asp-272 each coordinate Mg(2+). An ATP-binding site is contributed by Asp-272.

This sequence belongs to the SELO family. Requires Mg(2+) as cofactor. Mn(2+) serves as cofactor.

The catalysed reaction is L-seryl-[protein] + ATP = 3-O-(5'-adenylyl)-L-seryl-[protein] + diphosphate. It carries out the reaction L-threonyl-[protein] + ATP = 3-O-(5'-adenylyl)-L-threonyl-[protein] + diphosphate. The enzyme catalyses L-tyrosyl-[protein] + ATP = O-(5'-adenylyl)-L-tyrosyl-[protein] + diphosphate. It catalyses the reaction L-histidyl-[protein] + UTP = N(tele)-(5'-uridylyl)-L-histidyl-[protein] + diphosphate. The catalysed reaction is L-seryl-[protein] + UTP = O-(5'-uridylyl)-L-seryl-[protein] + diphosphate. It carries out the reaction L-tyrosyl-[protein] + UTP = O-(5'-uridylyl)-L-tyrosyl-[protein] + diphosphate. Functionally, nucleotidyltransferase involved in the post-translational modification of proteins. It can catalyze the addition of adenosine monophosphate (AMP) or uridine monophosphate (UMP) to a protein, resulting in modifications known as AMPylation and UMPylation. This chain is Protein nucleotidyltransferase YdiU, found in Chromohalobacter salexigens (strain ATCC BAA-138 / DSM 3043 / CIP 106854 / NCIMB 13768 / 1H11).